Consider the following 569-residue polypeptide: Urease subunit alpha (569 aa).

In terms of domain architecture, Urease spans 131–569 (GGFDSHIHFI…LPMAQRYFLF (439 aa)). Residues H136, H138, and K219 each coordinate Ni(2+). N6-carboxylysine is present on K219. A substrate-binding site is contributed by H221. Positions 248 and 274 each coordinate Ni(2+). Residue H322 is the Proton donor of the active site. D362 contributes to the Ni(2+) binding site.

This sequence belongs to the metallo-dependent hydrolases superfamily. Urease alpha subunit family. In terms of assembly, heterotrimer of UreA (gamma), UreB (beta) and UreC (alpha) subunits. Three heterotrimers associate to form the active enzyme. It depends on Ni cation as a cofactor. In terms of processing, carboxylation allows a single lysine to coordinate two nickel ions.

It localises to the cytoplasm. It catalyses the reaction urea + 2 H2O + H(+) = hydrogencarbonate + 2 NH4(+). The protein operates within nitrogen metabolism; urea degradation; CO(2) and NH(3) from urea (urease route): step 1/1. This chain is Urease subunit alpha, found in Ruegeria pomeroyi (strain ATCC 700808 / DSM 15171 / DSS-3) (Silicibacter pomeroyi).